We begin with the raw amino-acid sequence, 339 residues long: Oncoprotein MEQ (339 aa).

The interval 1–80 (MSQEPEPGAM…ARRRRRKQTD (80 aa)) is disordered. Position 42 is a phosphoserine; by host CDK2 (Ser-42). A basic motif region spans residues 57–84 (KQKLERRRKRNRDAARRRRRKQTDYVDK). Residues 57–120 (KQKLERRRKR…TSLRVQLACH (64 aa)) form the bZIP domain. A compositionally biased stretch (basic residues) spans 60 to 77 (LERRRKRNRDAARRRRRK). Positions 62–78 (RRRKRNRDAARRRRRKQ) match the Nuclear localization signal motif. Residues 85–113 (LHEACEELQRANEHLRKEIRDLRTECTSL) form a leucine-zipper region. Residues 120 to 339 (HEPVCPMAVP…VWWFPGDGRP (220 aa)) are transactivation domain. The segment covering 145–160 (PEPPICTPPPPSPDEP) has biased composition (pro residues). A disordered region spans residues 145–172 (PEPPICTPPPPSPDEPNAPHCSGSQPPI).

The protein belongs to the bZIP family. Jun subfamily. Homodimer. Interacts with host JUN; this interaction allows MEQ to engage in host cell processes by disguising itself as a cellular JUN. Post-translationally, phosphorylated by host CDK2; this phosphorylation greatly reduces the DNA binding activity of MEQ.

It localises to the host nucleus. The protein localises to the host nucleolus. In terms of biological role, functions as a DNA-binding transcription factor. Promotes transformation, host cell growth, host cell-cycle progression through G1/S phase, and possesses antiapoptotic activity. Forms functional heterodimers with host JUN. These heterodimers bind with high affinity DNA sequences called MEQ-responsive elements MERE I (TGACA/GTCA), while MEQ homodimers bind a second type of sites termed MERE II (ACACA). Both homo and heterodimerization of MEQ are required for oncogenesis. The polypeptide is Oncoprotein MEQ (MDV005) (Gallid herpesvirus 2 (strain Chicken/Md5/ATCC VR-987) (GaHV-2)).